The sequence spans 114 residues: Phycoerythrin alpha-1 subunit (114 aa).

Residues Asp-52, Ser-53, Glu-63, Arg-64, Cys-67, Thr-72, Lys-74, Ala-75, and Lys-84 each contribute to the (2R,3E)-phycoerythrobilin site.

The protein belongs to the phycoerythrin family. In terms of assembly, heterotetramer of 2 different alpha chains and 2 identical beta chains which form 2 alpha-beta heterodimers within the heterotetramer. The two alpha-beta heterodimers are rotated to an open configuration in contrast to the closed configuration found in other cryptophyte species due to the insertion of a single amino acid, Asp-65, in a conserved region of the alpha chain. In the open form, the central chromophores are not in physical contact but are separated by a water-filled channel. Contains three phycoerythrobilin chromophores with binding mediated by both the alpha and beta subunits.

The protein resides in the plastid. Its subcellular location is the chloroplast thylakoid membrane. Light-harvesting photosynthetic tetrapyrrole chromophore-protein from the phycobiliprotein complex. This is Phycoerythrin alpha-1 subunit from Hemiselmis andersenii (Cryptophyte alga).